A 159-amino-acid chain; its full sequence is Ribosomal RNA large subunit methyltransferase H (159 aa).

Residues Gly-108 and Phe-127–Phe-132 contribute to the S-adenosyl-L-methionine site.

Belongs to the RNA methyltransferase RlmH family. In terms of assembly, homodimer.

Its subcellular location is the cytoplasm. It catalyses the reaction pseudouridine(1915) in 23S rRNA + S-adenosyl-L-methionine = N(3)-methylpseudouridine(1915) in 23S rRNA + S-adenosyl-L-homocysteine + H(+). Specifically methylates the pseudouridine at position 1915 (m3Psi1915) in 23S rRNA. This is Ribosomal RNA large subunit methyltransferase H from Clostridium acetobutylicum (strain ATCC 824 / DSM 792 / JCM 1419 / IAM 19013 / LMG 5710 / NBRC 13948 / NRRL B-527 / VKM B-1787 / 2291 / W).